We begin with the raw amino-acid sequence, 262 residues long: Flap endonuclease Xni (262 aa).

Residue aspartate 112 participates in Mg(2+) binding. In terms of domain architecture, 5'-3' exonuclease spans 171–258 (QQLNDYWAIT…GFNLKDLRYT (88 aa)). Residues isoleucine 179, valine 190, and isoleucine 193 each contribute to the K(+) site. Positions 192 to 197 (GIGSKG) are interaction with DNA.

The protein belongs to the Xni family. Requires Mg(2+) as cofactor. K(+) is required as a cofactor.

Its function is as follows. Has flap endonuclease activity. During DNA replication, flap endonucleases cleave the 5'-overhanging flap structure that is generated by displacement synthesis when DNA polymerase encounters the 5'-end of a downstream Okazaki fragment. This is Flap endonuclease Xni from Psychromonas ingrahamii (strain DSM 17664 / CCUG 51855 / 37).